We begin with the raw amino-acid sequence, 400 residues long: Protein phyllopod (400 aa).

The segment at 109-127 (QERTKLRPVAMVRPTVRVQ) is interaction with sina. Residues 125–145 (RVQPQSQPQLQPQVPINPTPA) are disordered. The span at 127–138 (QPQSQPQLQPQV) shows a compositional bias: low complexity. An interaction with ttk region spans residues 241 to 320 (YQRFPQPSVD…TAISEVLPTA (80 aa)). Residues 319–362 (TARYQVTHEENKENQQAQEMELELEEEEEVDGRAELEVVQEAEA) are a coiled coil. The disordered stretch occupies residues 346–382 (EEVDGRAELEVVQEAEAPLEPQSHHKQGNSHQNSHQA).

In terms of assembly, component of some E3 complex at least composed of sina, ebi and phyl, required for the degradation of ttk. As to expression, in embryos, it is ubiquitously present before cellularization. During stages 9-11, it is expressed in neuroblasts and the SOP cells. From stage 12 onward, it decreases, but remains in a subset of PNS cells at stages 12-14. Weakly expressed in wing imaginal disks, in the SOP cells of wing margin bristles, notal macrochaetes, and other sensory organs. In leg disks, it is expressed in the precursors of the femoral chordotonal organs, as well as in external sensory SOP cells. Strongly expressed in the eye-antenna disk, it is specifically expressed in R1, R6 and R7 cells, and not in R3, R3, R4, R5 and R8 cells.

It localises to the nucleus. Its function is as follows. Essential adapter component of E3 ubiquitin ligase complexes; involved in R7 photoreceptor cell differentiation, embryonic nervous system, external sensory organ development and specification of particular muscles. E3 ubiquitin ligase complexes mediate ubiquitination and subsequent proteasomal degradation of target proteins. Required for specification of R7 photoreceptor cell fate in the eye by participating in the ubiquitination and subsequent proteasomal degradation of Tramtrack (ttk), a general inhibitor of photoreceptor differentiation. Acts downstream of Notch signaling to specify the fate of the SOP (sensory organ precursor) cells and their progeny, probably via the sina-mediated proteasomal degradation of ttk. Its restricted pattern of expression, upon Notch and Ras signaling pathways, suggests that it acts as a key determinant in E3 complexes to trigger protein proteolysis in appropriate cells. The polypeptide is Protein phyllopod (phyl) (Drosophila melanogaster (Fruit fly)).